Reading from the N-terminus, the 577-residue chain is Proline--tRNA ligase (577 aa).

The protein belongs to the class-II aminoacyl-tRNA synthetase family. ProS type 1 subfamily. Homodimer.

It localises to the cytoplasm. It catalyses the reaction tRNA(Pro) + L-proline + ATP = L-prolyl-tRNA(Pro) + AMP + diphosphate. In terms of biological role, catalyzes the attachment of proline to tRNA(Pro) in a two-step reaction: proline is first activated by ATP to form Pro-AMP and then transferred to the acceptor end of tRNA(Pro). As ProRS can inadvertently accommodate and process non-cognate amino acids such as alanine and cysteine, to avoid such errors it has two additional distinct editing activities against alanine. One activity is designated as 'pretransfer' editing and involves the tRNA(Pro)-independent hydrolysis of activated Ala-AMP. The other activity is designated 'posttransfer' editing and involves deacylation of mischarged Ala-tRNA(Pro). The misacylated Cys-tRNA(Pro) is not edited by ProRS. The protein is Proline--tRNA ligase of Helicobacter pylori (strain ATCC 700392 / 26695) (Campylobacter pylori).